A 322-amino-acid chain; its full sequence is uncharacterized protein (322 aa).

Positions 277–322 (LVTYGGKDGPSDNEDGPSDDEDGPSDDEEGLSKDGVSEYYQSDLDD) are disordered. The span at 287–305 (SDNEDGPSDDEDGPSDDEE) shows a compositional bias: acidic residues.

This is an uncharacterized protein from Frog virus 3 (isolate Goorha) (FV-3).